Consider the following 65-residue polypeptide: Muscarinic m1-toxin2 (65 aa).

4 disulfides stabilise this stretch: cysteine 3–cysteine 24, cysteine 17–cysteine 42, cysteine 46–cysteine 57, and cysteine 58–cysteine 63.

The protein belongs to the three-finger toxin family. Short-chain subfamily. Aminergic toxin sub-subfamily. In terms of assembly, monomer. In terms of tissue distribution, expressed by the venom gland.

The protein resides in the secreted. In terms of biological role, binds irreversibly and specifically to M1 (CHRM1) muscarinic acetylcholine receptors, blocking further binding of antagonists and preventing the action of agonists. In Dendroaspis angusticeps (Eastern green mamba), this protein is Muscarinic m1-toxin2.